The following is a 202-amino-acid chain: Translation initiation factor IF-3 (202 aa).

Belongs to the IF-3 family. Monomer.

The protein localises to the cytoplasm. Its function is as follows. IF-3 binds to the 30S ribosomal subunit and shifts the equilibrium between 70S ribosomes and their 50S and 30S subunits in favor of the free subunits, thus enhancing the availability of 30S subunits on which protein synthesis initiation begins. This chain is Translation initiation factor IF-3, found in Prochlorococcus marinus (strain MIT 9211).